The sequence spans 350 residues: UBX domain-containing protein 2B (350 aa).

The segment covering 1 to 29 (MEERENSEEGDDGAGEEEEEDQGSGEDGG) has biased composition (acidic residues). The interval 1–46 (MEERENSEEGDDGAGEEEEEDQGSGEDGGEVGAEREQEAELKDSLR) is disordered. Basic and acidic residues predominate over residues 32-45 (GAEREQEAELKDSL). Positions 160-225 (EIQILLKLWS…MEDHQDQEYI (66 aa)) constitute an SEP domain. The 78-residue stretch at 271-348 (EHVPTTKIQI…DILNTVILQR (78 aa)) folds into the UBX domain.

It belongs to the NSFL1C family.

The protein resides in the nucleus. Its subcellular location is the cytoplasm. It is found in the cytosol. The protein localises to the endoplasmic reticulum. It localises to the golgi apparatus. The protein resides in the cytoskeleton. Its subcellular location is the microtubule organizing center. It is found in the centrosome. Adapter protein required for Golgi and endoplasmic reticulum biogenesis. Involved in Golgi and endoplasmic reticulum maintenance during interphase and in their reassembly at the end of mitosis. Regulates the centrosomal levels of kinase aurka-a/Aurora A during mitotic progression by promoting aurka-a removal from centrosomes in prophase. Also, regulates spindle orientation during mitosis. In Xenopus laevis (African clawed frog), this protein is UBX domain-containing protein 2B (ubxn2b).